Here is a 235-residue protein sequence, read N- to C-terminus: (5-formylfuran-3-yl)methyl phosphate synthase (235 aa).

Lys27 serves as the catalytic Schiff-base intermediate with substrate. Lys86 (proton acceptor) is an active-site residue.

This sequence belongs to the MfnB family.

It catalyses the reaction 2 D-glyceraldehyde 3-phosphate = 4-(hydroxymethyl)-2-furancarboxaldehyde phosphate + phosphate + 2 H2O. It functions in the pathway cofactor biosynthesis; methanofuran biosynthesis. Its function is as follows. Catalyzes the formation of 4-(hydroxymethyl)-2-furancarboxaldehyde phosphate (4-HFC-P) from two molecules of glyceraldehyde-3-P (GA-3-P). The sequence is that of (5-formylfuran-3-yl)methyl phosphate synthase from Archaeoglobus fulgidus (strain ATCC 49558 / DSM 4304 / JCM 9628 / NBRC 100126 / VC-16).